The sequence spans 1209 residues: Phospholipid-transporting ATPase ID (1209 aa).

The segment covering 1–12 has biased composition (basic and acidic residues); sequence MTVPKEMPEKWA. Positions 1 to 36 are disordered; the sequence is MTVPKEMPEKWARAQAPPSWSRKKPSWGTEEERRAR. At 1 to 64 the chain is on the cytoplasmic side; the sequence is MTVPKEMPEK…TSKYNILTFL (64 aa). A helical membrane pass occupies residues 65–86; it reads PVNLFEQFQEVANTYFLFLLIL. Topologically, residues 87-92 are exoplasmic loop; sequence QLIPQI. A helical membrane pass occupies residues 93-112; it reads SSLSWFTTIVPLVLVLTITA. Topologically, residues 113–295 are cytoplasmic; the sequence is VKDATDDYFR…TSIDRLMNTL (183 aa). The chain crosses the membrane as a helical span at residues 296–317; it reads VLWIFGFLVCMGVILAIGNAIW. Over 318–346 the chain is Exoplasmic loop; the sequence is EHEVGMRFQVYLPWDEAVDSAFFSGFLSF. The helical transmembrane segment at 347–368 threads the bilayer; that stretch reads WSYIIILNTVVPISLYVSVEVI. Over 369-889 the chain is Cytoplasmic; sequence RLGHSYFINW…GRWSYLRMCK (521 aa). The 4-aspartylphosphate intermediate role is filled by aspartate 411. ATP contacts are provided by aspartate 411, lysine 412, threonine 413, glutamate 515, phenylalanine 556, lysine 579, arginine 613, threonine 693, glycine 694, aspartate 695, arginine 807, and lysine 813. Position 411 (aspartate 411) interacts with Mg(2+). A Mg(2+)-binding site is contributed by threonine 413. Aspartate 833 contributes to the Mg(2+) binding site. Residues asparagine 836 and aspartate 837 each coordinate ATP. A Mg(2+)-binding site is contributed by aspartate 837. Residues 890–910 form a helical membrane-spanning segment; that stretch reads FLCYFFYKNFAFTMVHFWFGF. Topologically, residues 911–922 are exoplasmic loop; the sequence is FCGFSAQTVYDQ. A helical membrane pass occupies residues 923–942; the sequence is YFITLYNIVYTSLPVLAMGV. Residues 943–972 lie on the Cytoplasmic side of the membrane; that stretch reads FDQDVPEQRSMEYPKLYEPGQLNLLFNKRE. The chain crosses the membrane as a helical span at residues 973-994; that stretch reads FFICIAQGIYTSVLMFFIPYGV. Topologically, residues 995–1008 are exoplasmic loop; it reads FADATRDDGTQLAD. Residues 1009–1031 form a helical membrane-spanning segment; that stretch reads YQSFAVTVATSLVIVVSVQIGLD. Topologically, residues 1032-1037 are cytoplasmic; sequence TGYWTA. Residues 1038-1058 traverse the membrane as a helical segment; that stretch reads INHFFIWGSLAVYFAILFAMH. The Exoplasmic loop portion of the chain corresponds to 1059–1078; that stretch reads SNGLFDMFPNQFRFVGNAQN. A helical membrane pass occupies residues 1079-1103; it reads TLAQPTVWLTIVLTTVVCIMPVVAF. The Cytoplasmic portion of the chain corresponds to 1104 to 1209; that stretch reads RFLRLNLKPD…SGGADKPLKG (106 aa). The residue at position 1175 (serine 1175) is a Phosphoserine. Residues 1181-1209 form a disordered region; it reads SSSWIESLRRKKSDSASSPSGGADKPLKG. The span at 1195-1209 shows a compositional bias: low complexity; sequence SASSPSGGADKPLKG.

It belongs to the cation transport ATPase (P-type) (TC 3.A.3) family. Type IV subfamily. In terms of assembly, component of a P4-ATPase flippase complex which consists of a catalytic alpha subunit ATP8B2 and an accessory beta subunit TMEM30A or TMEM30B. It depends on Mg(2+) as a cofactor. Isoform 3 is ubiquitous, with highest expression in aorta, cerebellum and uterus.

Its subcellular location is the cell membrane. It localises to the endoplasmic reticulum membrane. The enzyme catalyses ATP + H2O + phospholipidSide 1 = ADP + phosphate + phospholipidSide 2.. It carries out the reaction a 1,2-diacyl-sn-glycero-3-phosphocholine(out) + ATP + H2O = a 1,2-diacyl-sn-glycero-3-phosphocholine(in) + ADP + phosphate + H(+). Functionally, catalytic component of P4-ATPase flippase complex, which catalyzes the hydrolysis of ATP coupled to the transport of phosphatidylcholine (PC) from the outer to the inner leaflet of the plasma membrane. May contribute to the maintenance of membrane lipid asymmetry. The protein is Phospholipid-transporting ATPase ID of Homo sapiens (Human).